Reading from the N-terminus, the 186-residue chain is UPF0301 protein HI_0304 (186 aa).

It belongs to the UPF0301 (AlgH) family.

In Haemophilus influenzae (strain ATCC 51907 / DSM 11121 / KW20 / Rd), this protein is UPF0301 protein HI_0304.